The sequence spans 602 residues: Elongation factor 4 (602 aa).

The 183-residue stretch at 2–184 (DHIRNFSIIA…AVIARMPPPK (183 aa)) folds into the tr-type G domain. GTP-binding positions include 14 to 19 (DHGKST) and 131 to 134 (NKMD).

It belongs to the TRAFAC class translation factor GTPase superfamily. Classic translation factor GTPase family. LepA subfamily.

The protein localises to the cell inner membrane. It catalyses the reaction GTP + H2O = GDP + phosphate + H(+). Functionally, required for accurate and efficient protein synthesis under certain stress conditions. May act as a fidelity factor of the translation reaction, by catalyzing a one-codon backward translocation of tRNAs on improperly translocated ribosomes. Back-translocation proceeds from a post-translocation (POST) complex to a pre-translocation (PRE) complex, thus giving elongation factor G a second chance to translocate the tRNAs correctly. Binds to ribosomes in a GTP-dependent manner. This Leptothrix cholodnii (strain ATCC 51168 / LMG 8142 / SP-6) (Leptothrix discophora (strain SP-6)) protein is Elongation factor 4.